Here is an 856-residue protein sequence, read N- to C-terminus: Envelope glycoprotein GP350 (856 aa).

Topologically, residues 1–809 are virion surface; sequence MEAALLVCQY…TSQPRFSNLS (809 aa). 27 N-linked (GlcNAc...) asparagine; by host glycosylation sites follow: N47, N87, N114, N166, N169, N195, N229, N277, N318, N328, N345, N356, N378, N386, N411, N435, N443, N457, N497, N519, N533, N554, N568, N582, N585, N603, and N614. The interval 421-779 is disordered; sequence FSKAPESTTT…PPSTSSELRP (359 aa). Low complexity predominate over residues 427 to 437; that stretch reads STTTSPTSNTT. The segment covering 442 to 488 has biased composition (polar residues); that stretch reads PNTTTGLPSSTHVPTNLTAPASTGPTVSTADVTSPTPAGTTSGASPV. Positions 507–570 are enriched in low complexity; the sequence is TSPTPAVTTP…AVTTPTPNAT (64 aa). Residues 575–616 are compositionally biased toward polar residues; it reads GETSPQANTTNHTLGGTSSTPVVTSQPKNATSAVTTGQHNIT. A compositionally biased stretch (low complexity) spans 617 to 631; the sequence is SSSTSSMSLRPSSIS. A glycan (N-linked (GlcNAc...) asparagine; by host) is linked at N650. Low complexity predominate over residues 654–669; it reads VTPASTSTHHVSTSSP. Positions 674–690 are enriched in polar residues; sequence GTTSQASGPGNSSTSTK. N684, N695, N704, and N729 each carry an N-linked (GlcNAc...) asparagine; by host glycan. The segment covering 703 to 730 has biased composition (polar residues); sequence KNATSPQAPSGQKTAVPTVTSTGGKANS. The span at 731-741 shows a compositional bias: low complexity; it reads TTGGKHTTGHG. The span at 743–776 shows a compositional bias: polar residues; the sequence is RTSTEPTTDYGGDSTTPRTRYNATTYLPPSTSSE. N764 and N807 each carry an N-linked (GlcNAc...) asparagine; by host glycan. The chain crosses the membrane as a helical span at residues 810–830; that stretch reads MLVLQWASLAVLTLLLLLVMA. Topologically, residues 831–856 are intravirion; sequence DCAFRRNLSTSHTYTTPPYDDAETYV.

Belongs to the Epstein-Barr GP350 family. Interacts with host CR2. Post-translationally, extensively glycosylated.

It localises to the virion membrane. The protein resides in the host membrane. Functionally, initiates virion attachment to host B-lymphocyte cell, leading to virus entry. Acts by binding to host CR2 at the surface of B-lymphocytes, facilitating the binding of viral glycoprotein gp42 to HLA class II molecules. Attachment triggers virion-host membrane fusion and invasion of the host cell. The sequence is that of Envelope glycoprotein GP350 from Homo sapiens (Human).